The chain runs to 205 residues: Pyridoxal 5'-phosphate synthase subunit PdxT (205 aa).

An L-glutamine-binding site is contributed by Gly-54 to Ser-56. Residue Cys-86 is the Nucleophile of the active site. L-glutamine contacts are provided by residues Arg-118 and Ile-147–Arg-148. Catalysis depends on charge relay system residues His-183 and Glu-185.

It belongs to the glutaminase PdxT/SNO family. In the presence of PdxS, forms a dodecamer of heterodimers. Only shows activity in the heterodimer.

The catalysed reaction is aldehydo-D-ribose 5-phosphate + D-glyceraldehyde 3-phosphate + L-glutamine = pyridoxal 5'-phosphate + L-glutamate + phosphate + 3 H2O + H(+). The enzyme catalyses L-glutamine + H2O = L-glutamate + NH4(+). It participates in cofactor biosynthesis; pyridoxal 5'-phosphate biosynthesis. Functionally, catalyzes the hydrolysis of glutamine to glutamate and ammonia as part of the biosynthesis of pyridoxal 5'-phosphate. The resulting ammonia molecule is channeled to the active site of PdxS. This chain is Pyridoxal 5'-phosphate synthase subunit PdxT, found in Nitrosopumilus maritimus (strain SCM1).